Consider the following 295-residue polypeptide: Acetylglutamate kinase (295 aa).

Residues 66-67 (GG), arginine 88, and asparagine 193 each bind substrate.

The protein belongs to the acetylglutamate kinase family. ArgB subfamily.

Its subcellular location is the cytoplasm. The catalysed reaction is N-acetyl-L-glutamate + ATP = N-acetyl-L-glutamyl 5-phosphate + ADP. It participates in amino-acid biosynthesis; L-arginine biosynthesis; N(2)-acetyl-L-ornithine from L-glutamate: step 2/4. Functionally, catalyzes the ATP-dependent phosphorylation of N-acetyl-L-glutamate. This Rhizobium rhizogenes (strain K84 / ATCC BAA-868) (Agrobacterium radiobacter) protein is Acetylglutamate kinase.